We begin with the raw amino-acid sequence, 217 residues long: tRNA (guanine-N(7)-)-methyltransferase (217 aa).

Residues Glu44, Glu69, Asp96, and Asp118 each coordinate S-adenosyl-L-methionine. Asp118 is an active-site residue. Residues Lys122, Asp154, and 191–194 (TEYE) contribute to the substrate site.

This sequence belongs to the class I-like SAM-binding methyltransferase superfamily. TrmB family.

The enzyme catalyses guanosine(46) in tRNA + S-adenosyl-L-methionine = N(7)-methylguanosine(46) in tRNA + S-adenosyl-L-homocysteine. It participates in tRNA modification; N(7)-methylguanine-tRNA biosynthesis. Catalyzes the formation of N(7)-methylguanine at position 46 (m7G46) in tRNA. The chain is tRNA (guanine-N(7)-)-methyltransferase from Bacillus cereus (strain G9842).